Consider the following 229-residue polypeptide: Potassium/proton antiporter CemA (229 aa).

Transmembrane regions (helical) follow at residues 7–27 (FTPL…SFSF), 114–134 (IISF…LVVL), 154–174 (ILLL…ELMI), and 189–209 (IISG…KYWI).

The protein belongs to the CemA family.

The protein resides in the plastid. Its subcellular location is the chloroplast inner membrane. The catalysed reaction is K(+)(in) + H(+)(out) = K(+)(out) + H(+)(in). Functionally, contributes to K(+)/H(+) antiport activity by supporting proton efflux to control proton extrusion and homeostasis in chloroplasts in a light-dependent manner to modulate photosynthesis. Prevents excessive induction of non-photochemical quenching (NPQ) under continuous-light conditions. Indirectly promotes efficient inorganic carbon uptake into chloroplasts. This Nandina domestica (Heavenly bamboo) protein is Potassium/proton antiporter CemA.